Here is a 161-residue protein sequence, read N- to C-terminus: MATIIAKIESKINEYLKARNKEDWKEKTFTQAEKFSGIPRERIVSMAFLMLSIYVLLGNFLPLFSHIICIFWPVKESFMILRQQKNPSDNILLYWILYAMVSLFDYSALPGVPFYYFAKTGLFLSITTNGFDKLKEWSEPALKFTETWVLVTPPPPGEEEN.

This is an uncharacterized protein from Caenorhabditis elegans.